A 432-amino-acid chain; its full sequence is Adenylosuccinate synthetase (432 aa).

GTP-binding positions include 12-18 (GDEGKGK) and 40-42 (GHT). Asp13 serves as the catalytic Proton acceptor. Residues Asp13 and Gly40 each coordinate Mg(2+). IMP contacts are provided by residues 13–16 (DEGK), 38–41 (NAGH), Thr129, Arg143, Gln224, Thr239, and Arg303. The active-site Proton donor is His41. Residue 299-305 (VTTGRRR) participates in substrate binding. GTP-binding positions include Arg305, 331–333 (KLD), and 413–415 (GVG).

It belongs to the adenylosuccinate synthetase family. As to quaternary structure, homodimer. Requires Mg(2+) as cofactor.

It is found in the cytoplasm. It carries out the reaction IMP + L-aspartate + GTP = N(6)-(1,2-dicarboxyethyl)-AMP + GDP + phosphate + 2 H(+). The protein operates within purine metabolism; AMP biosynthesis via de novo pathway; AMP from IMP: step 1/2. In terms of biological role, plays an important role in the de novo pathway of purine nucleotide biosynthesis. Catalyzes the first committed step in the biosynthesis of AMP from IMP. This is Adenylosuccinate synthetase from Mycobacterium tuberculosis (strain CDC 1551 / Oshkosh).